Reading from the N-terminus, the 239-residue chain is Carboxy-S-adenosyl-L-methionine synthase (239 aa).

Residues Tyr36, 61–63 (GCS), 111–112 (DI), Asn126, and Arg193 each bind S-adenosyl-L-methionine.

The protein belongs to the class I-like SAM-binding methyltransferase superfamily. Cx-SAM synthase family. Homodimer.

It carries out the reaction prephenate + S-adenosyl-L-methionine = carboxy-S-adenosyl-L-methionine + 3-phenylpyruvate + H2O. Functionally, catalyzes the conversion of S-adenosyl-L-methionine (SAM) to carboxy-S-adenosyl-L-methionine (Cx-SAM). The sequence is that of Carboxy-S-adenosyl-L-methionine synthase from Nitratiruptor sp. (strain SB155-2).